We begin with the raw amino-acid sequence, 423 residues long: Histidine--tRNA ligase (423 aa).

The protein belongs to the class-II aminoacyl-tRNA synthetase family. In terms of assembly, homodimer.

The protein resides in the cytoplasm. The enzyme catalyses tRNA(His) + L-histidine + ATP = L-histidyl-tRNA(His) + AMP + diphosphate + H(+). The protein is Histidine--tRNA ligase of Orientia tsutsugamushi (strain Boryong) (Rickettsia tsutsugamushi).